The chain runs to 499 residues: Chaperone SurA (499 aa).

The signal sequence occupies residues 1-36 (MKRQEFALFSLTLMLSPWRRVLLPAVLAAMAGPALA). 2 consecutive PpiC domains span residues 231–333 (PTEF…KLTA) and 352–450 (ITQT…QVEN).

The protein resides in the periplasm. The enzyme catalyses [protein]-peptidylproline (omega=180) = [protein]-peptidylproline (omega=0). Its function is as follows. Chaperone involved in the correct folding and assembly of outer membrane proteins. Recognizes specific patterns of aromatic residues and the orientation of their side chains, which are found more frequently in integral outer membrane proteins. May act in both early periplasmic and late outer membrane-associated steps of protein maturation. The chain is Chaperone SurA from Cupriavidus pinatubonensis (strain JMP 134 / LMG 1197) (Cupriavidus necator (strain JMP 134)).